A 238-amino-acid chain; its full sequence is Cadherin-2 (238 aa).

Cadherin domains follow at residues 1–46 (TKPL…RPEF), 47–161 (LHQV…PPEF), and 162–238 (TAMT…RMFV). Residues 1-238 (TKPLDRELIA…IDFETNRMFV (238 aa)) are Extracellular-facing. Residues Asp5, Glu7, Asp38, Met39, Asn40, Asp41, and Asn42 each contribute to the Ca(2+) site. Asn52 is a glycosylation site (N-linked (GlcNAc...) asparagine). Ca(2+) is bound by residues Asp72, Asp74, and Asn80. N-linked (GlcNAc...) asparagine glycosylation occurs at Asn104. Asp132 is a Ca(2+) binding site. Residue Asn181 is glycosylated (N-linked (GlcNAc...) asparagine).

As to quaternary structure, homodimer (via extracellular region). Can also form heterodimers with other cadherins (via extracellular region). Dimerization occurs in trans, i.e. with a cadherin chain from another cell. Interacts with CDCP1. Interacts with PCDH8; this complex may also include TAOK2. The interaction with PCDH8 may lead to internalization through TAOK2/p38 MAPK pathway. Identified in a complex containing FGFR4, NCAM1, CDH2, PLCG1, FRS2, SRC, SHC1, GAP43 and CTTN. May interact with OBSCN (via protein kinase domain 2). Cleaved by MMP24. Ectodomain cleavage leads to the generation of a soluble 90 kDa N-terminal soluble fragment and a 45 kDa membrane-bound C-terminal fragment 1 (CTF1), which is further cleaved by gamma-secretase into a 35 kDa. Cleavage in neural stem cells by MMP24 affects CDH2-mediated anchorage of neural stem cells to ependymocytes in the adult subependymal zone, leading to modulate neural stem cell quiescence. In terms of processing, may be phosphorylated by OBSCN.

It is found in the cell membrane. The protein localises to the sarcolemma. It localises to the cell junction. The protein resides in the cell surface. Its subcellular location is the desmosome. It is found in the adherens junction. Its function is as follows. Calcium-dependent cell adhesion protein; preferentially mediates homotypic cell-cell adhesion by dimerization with a CDH2 chain from another cell. Cadherins may thus contribute to the sorting of heterogeneous cell types. Acts as a regulator of neural stem cells quiescence by mediating anchorage of neural stem cells to ependymocytes in the adult subependymal zone: upon cleavage by MMP24, CDH2-mediated anchorage is affected, leading to modulate neural stem cell quiescence. Plays a role in cell-to-cell junction formation between pancreatic beta cells and neural crest stem (NCS) cells, promoting the formation of processes by NCS cells. Required for proper neurite branching. Required for pre- and postsynaptic organization. CDH2 may be involved in neuronal recognition mechanism. In hippocampal neurons, may regulate dendritic spine density. The sequence is that of Cadherin-2 (CDH2) from Cricetulus griseus (Chinese hamster).